The following is a 365-amino-acid chain: Neutral protease 2 homolog mep20 (365 aa).

Residues 1 to 19 (MKVTILASAILALINGALA) form the signal peptide. The propeptide occupies 20–172 (LPANTPTLDV…PQAIKLLDRR (153 aa)). N73 carries an N-linked (GlcNAc...) asparagine glycan. Cystine bridges form between C178/C249 and C256/C274. H299 serves as a coordination point for Zn(2+). E300 is a catalytic residue. The Zn(2+) site is built by H303 and D314. N351 carries an N-linked (GlcNAc...) asparagine glycan.

This sequence belongs to the peptidase M35 family. It depends on Zn(2+) as a cofactor.

It is found in the secreted. The catalysed reaction is Preferential cleavage of bonds with hydrophobic residues in P1'. Also 3-Asn-|-Gln-4 and 8-Gly-|-Ser-9 bonds in insulin B chain.. Secreted metalloproteinase that allows assimilation of proteinaceous substrates. Shows high activities on basic nuclear substrates such as histone and protamine. May be involved in virulence. The protein is Neutral protease 2 homolog mep20 (mep20) of Aspergillus fumigatus (Neosartorya fumigata).